The chain runs to 560 residues: Membrane protein insertase YidC (560 aa).

The next 6 helical transmembrane spans lie at 5–25 (IINL…WQYF), 334–354 (AIDF…MNFF), 357–377 (YVGN…LLMF), 431–451 (LPIL…YVTI), 476–496 (LFGL…WPIL), and 522–542 (FMPL…LIYW).

It belongs to the OXA1/ALB3/YidC family. Type 1 subfamily. In terms of assembly, interacts with the Sec translocase complex via SecD. Specifically interacts with transmembrane segments of nascent integral membrane proteins during membrane integration.

It localises to the cell inner membrane. Functionally, required for the insertion and/or proper folding and/or complex formation of integral membrane proteins into the membrane. Involved in integration of membrane proteins that insert both dependently and independently of the Sec translocase complex, as well as at least some lipoproteins. Aids folding of multispanning membrane proteins. The sequence is that of Membrane protein insertase YidC from Rickettsia rickettsii (strain Iowa).